We begin with the raw amino-acid sequence, 122 residues long: Large ribosomal subunit protein uL14 (122 aa).

This sequence belongs to the universal ribosomal protein uL14 family. As to quaternary structure, part of the 50S ribosomal subunit. Forms a cluster with proteins L3 and L19. In the 70S ribosome, L14 and L19 interact and together make contacts with the 16S rRNA in bridges B5 and B8.

Its function is as follows. Binds to 23S rRNA. Forms part of two intersubunit bridges in the 70S ribosome. In Rubrobacter xylanophilus (strain DSM 9941 / JCM 11954 / NBRC 16129 / PRD-1), this protein is Large ribosomal subunit protein uL14.